A 74-amino-acid chain; its full sequence is Peptide BmKb1 (74 aa).

Residues M1–A22 form the signal peptide. K40 bears the Lysine amide mark. Residues D46–Y74 constitute a propeptide that is removed on maturation.

The protein belongs to the non-disulfide-bridged peptide (NDBP) superfamily. Short antimicrobial peptide (group 4) family. In terms of tissue distribution, expressed by the venom gland.

Its subcellular location is the secreted. The protein localises to the target cell membrane. Its function is as follows. Has antibacterial activity against Gram-positive bacteria S.aureus, M.luteus, B.subtilis, and Gram-negative bacteria E.coli, and P.aeruginosa. The chain is Peptide BmKb1 from Olivierus martensii (Manchurian scorpion).